Reading from the N-terminus, the 141-residue chain is HTH-type transcriptional repressor NsrR (141 aa).

In terms of domain architecture, HTH rrf2-type spans 2 to 129 (QLTNFTDFGL…DKHTIQDMLT (128 aa)). Residues 28–51 (ITVVTETFDVSRNHMVKIINKLGQ) constitute a DNA-binding region (H-T-H motif). [2Fe-2S] cluster-binding residues include C91, C96, and C102.

It depends on [2Fe-2S] cluster as a cofactor.

Functionally, nitric oxide-sensitive repressor of genes involved in protecting the cell against nitrosative stress. May require iron for activity. This is HTH-type transcriptional repressor NsrR from Aliivibrio fischeri (strain ATCC 700601 / ES114) (Vibrio fischeri).